We begin with the raw amino-acid sequence, 452 residues long: Keratin, type I cytoskeletal 42 (452 aa).

Residues 4–93 (TTSVRQFSTS…GVSDALLGGS (90 aa)) are head. The interval 94–129 (EKETMQNLNDRLATYLDRVRALEEANADLEVKIREW) is coil 1A. The 312-residue stretch at 94 to 405 (EKETMQNLND…RLLEGEDAHL (312 aa)) folds into the IF rod domain. The segment at 130 to 147 (YKKQGPGPARDYSPYFKT) is linker 1. The interval 148 to 239 (IEDLRNKILA…KNHEEEMNAL (92 aa)) is coil 1B. The linker 12 stretch occupies residues 240–262 (RGQVGGDVNVEMDAAPGVDLSRI). The coil 2 stretch occupies residues 263 to 401 (LNEMRDQYEK…ATYRRLLEGE (139 aa)). Residues 402–452 (DAHLATQYSSSLASQPSREGMVTSRQVRTIVEEVQDGKVVSSREQVHRSTH) are tail.

It belongs to the intermediate filament family. In terms of assembly, heterodimer of a type I and a type II keratin. Colocalizes with KRT8/KRT18 filament network. Expressed in nail matrix and nail bed epithelium (at protein level). Also expressed in tongue and digits with weak expression in vibrissae and in both filiform and fungiform papillae of oral mucosa.

The protein resides in the cytoplasm. This Mus musculus (Mouse) protein is Keratin, type I cytoskeletal 42.